Consider the following 242-residue polypeptide: Ubiquinone biosynthesis O-methyltransferase (242 aa).

Arginine 44, glycine 64, aspartate 85, and methionine 129 together coordinate S-adenosyl-L-methionine.

This sequence belongs to the methyltransferase superfamily. UbiG/COQ3 family.

The enzyme catalyses a 3-demethylubiquinol + S-adenosyl-L-methionine = a ubiquinol + S-adenosyl-L-homocysteine + H(+). It carries out the reaction a 3-(all-trans-polyprenyl)benzene-1,2-diol + S-adenosyl-L-methionine = a 2-methoxy-6-(all-trans-polyprenyl)phenol + S-adenosyl-L-homocysteine + H(+). It participates in cofactor biosynthesis; ubiquinone biosynthesis. O-methyltransferase that catalyzes the 2 O-methylation steps in the ubiquinone biosynthetic pathway. The protein is Ubiquinone biosynthesis O-methyltransferase of Salmonella arizonae (strain ATCC BAA-731 / CDC346-86 / RSK2980).